The following is a 182-amino-acid chain: Isopentenyl-diphosphate Delta-isomerase (182 aa).

Mn(2+)-binding residues include His25 and His32. Positions 30–164 (PLHLAFSCWL…PWAFSPWMVM (135 aa)) constitute a Nudix hydrolase domain. The active site involves Cys67. Residue His69 coordinates Mn(2+). Residue Glu87 participates in Mg(2+) binding. Positions 114 and 116 each coordinate Mn(2+). Glu116 is an active-site residue.

Belongs to the IPP isomerase type 1 family. As to quaternary structure, homodimer. Mg(2+) serves as cofactor. Mn(2+) is required as a cofactor.

The protein localises to the cytoplasm. The catalysed reaction is isopentenyl diphosphate = dimethylallyl diphosphate. Its pathway is isoprenoid biosynthesis; dimethylallyl diphosphate biosynthesis; dimethylallyl diphosphate from isopentenyl diphosphate: step 1/1. Its function is as follows. Catalyzes the 1,3-allylic rearrangement of the homoallylic substrate isopentenyl (IPP) to its highly electrophilic allylic isomer, dimethylallyl diphosphate (DMAPP). This is Isopentenyl-diphosphate Delta-isomerase from Salmonella arizonae (strain ATCC BAA-731 / CDC346-86 / RSK2980).